Reading from the N-terminus, the 130-residue chain is U-scoloptoxin(17)-Er1a (130 aa).

The signal sequence occupies residues Met-1–Ala-18.

This sequence belongs to the scoloptoxin-17 family. Contains 4 disulfide bonds. In terms of tissue distribution, expressed by the venom gland.

Its subcellular location is the secreted. The protein is U-scoloptoxin(17)-Er1a of Ethmostigmus rubripes (Giant centipede).